The chain runs to 228 residues: Expansin-B13 (228 aa).

The first 22 residues, 1-22 (MASSSLLLASVVVAAMVSAVSC), serve as a signal peptide directing secretion. Asparagine 32 is a glycosylation site (N-linked (GlcNAc...) asparagine). The Expansin-like EG45 domain maps to 61 to 172 (SGACGYKDVD…KEKGSEEWKA (112 aa)). Disulfide bonds link cysteine 64-cysteine 92 and cysteine 100-cysteine 106. One can recognise an Expansin-like CBD domain in the interval 142 to 223 (GKDEELLKYV…GWKADSVYKS (82 aa)).

It belongs to the expansin family. Expansin B subfamily.

The protein localises to the secreted. The protein resides in the cell wall. It localises to the membrane. Functionally, may cause loosening and extension of plant cell walls by disrupting non-covalent bonding between cellulose microfibrils and matrix glucans. No enzymatic activity has been found. May be required for rapid internodal elongation in deepwater rice during submergence. The polypeptide is Expansin-B13 (EXPB13) (Oryza sativa subsp. japonica (Rice)).